The sequence spans 384 residues: Cell division protein FtsZ (384 aa).

GTP-binding positions include 20–24 (GGGSN), 107–109 (GTG), Glu138, Arg142, and Asn186.

This sequence belongs to the FtsZ family. As to quaternary structure, homodimer. Polymerizes to form a dynamic ring structure in a strictly GTP-dependent manner. Interacts directly with several other division proteins.

The protein localises to the cytoplasm. In terms of biological role, essential cell division protein that forms a contractile ring structure (Z ring) at the future cell division site. The regulation of the ring assembly controls the timing and the location of cell division. One of the functions of the FtsZ ring is to recruit other cell division proteins to the septum to produce a new cell wall between the dividing cells. Binds GTP and shows GTPase activity. The sequence is that of Cell division protein FtsZ from Buchnera aphidicola subsp. Acyrthosiphon pisum (strain APS) (Acyrthosiphon pisum symbiotic bacterium).